A 307-amino-acid chain; its full sequence is uncharacterized protein (307 aa).

This is an uncharacterized protein from Acidianus hospitalis (AFV-1).